The chain runs to 389 residues: 8-amino-7-oxononanoate synthase (389 aa).

Position 19 (arginine 19) interacts with substrate. 106 to 107 (GY) is a binding site for pyridoxal 5'-phosphate. Residue histidine 131 participates in substrate binding. Pyridoxal 5'-phosphate is bound by residues serine 178, 203 to 206 (DDAH), and 234 to 237 (TLSK). Position 237 is an N6-(pyridoxal phosphate)lysine (lysine 237). Residue threonine 351 participates in substrate binding.

The protein belongs to the class-II pyridoxal-phosphate-dependent aminotransferase family. BioF subfamily. Homodimer. Pyridoxal 5'-phosphate serves as cofactor.

The catalysed reaction is 6-carboxyhexanoyl-[ACP] + L-alanine + H(+) = (8S)-8-amino-7-oxononanoate + holo-[ACP] + CO2. It participates in cofactor biosynthesis; biotin biosynthesis. Functionally, catalyzes the decarboxylative condensation of pimeloyl-[acyl-carrier protein] and L-alanine to produce 8-amino-7-oxononanoate (AON), [acyl-carrier protein], and carbon dioxide. Can also use pimeloyl-CoA instead of pimeloyl-ACP as substrate. The polypeptide is 8-amino-7-oxononanoate synthase (bioF) (Lysinibacillus sphaericus (Bacillus sphaericus)).